Consider the following 232-residue polypeptide: 2-C-methyl-D-erythritol 4-phosphate cytidylyltransferase (232 aa).

Belongs to the IspD/TarI cytidylyltransferase family. IspD subfamily.

It catalyses the reaction 2-C-methyl-D-erythritol 4-phosphate + CTP + H(+) = 4-CDP-2-C-methyl-D-erythritol + diphosphate. The protein operates within isoprenoid biosynthesis; isopentenyl diphosphate biosynthesis via DXP pathway; isopentenyl diphosphate from 1-deoxy-D-xylulose 5-phosphate: step 2/6. Its function is as follows. Catalyzes the formation of 4-diphosphocytidyl-2-C-methyl-D-erythritol from CTP and 2-C-methyl-D-erythritol 4-phosphate (MEP). In Geobacter metallireducens (strain ATCC 53774 / DSM 7210 / GS-15), this protein is 2-C-methyl-D-erythritol 4-phosphate cytidylyltransferase.